Reading from the N-terminus, the 140-residue chain is ATP synthase epsilon chain (140 aa).

Belongs to the ATPase epsilon chain family. F-type ATPases have 2 components, CF(1) - the catalytic core - and CF(0) - the membrane proton channel. CF(1) has five subunits: alpha(3), beta(3), gamma(1), delta(1), epsilon(1). CF(0) has three main subunits: a, b and c.

The protein resides in the cell inner membrane. Its function is as follows. Produces ATP from ADP in the presence of a proton gradient across the membrane. This chain is ATP synthase epsilon chain, found in Bdellovibrio bacteriovorus (strain ATCC 15356 / DSM 50701 / NCIMB 9529 / HD100).